We begin with the raw amino-acid sequence, 102 residues long: Parathymosin (102 aa).

The tract at residues Met-1–Ala-102 is disordered. The residue at position 2 (Ser-2) is an N-acetylserine. Position 2 is a phosphoserine (Ser-2). The residue at position 4 (Lys-4) is an N6-acetyllysine. Ser-5 and Ser-13 each carry phosphoserine. The span at Ser-13–Val-37 shows a compositional bias: basic and acidic residues. Position 15 is an N6-acetyllysine (Lys-15). Over residues Val-38–Gly-76 the composition is skewed to acidic residues. Thr-52 is modified (phosphothreonine). Residue Lys-92 is modified to N6-acetyllysine.

It belongs to the pro/parathymosin family.

Parathymosin may mediate immune function by blocking the effect of prothymosin alpha which confers resistance to certain opportunistic infections. The protein is Parathymosin (PTMS) of Bos taurus (Bovine).